A 74-amino-acid polypeptide reads, in one-letter code: MAKAKPAWSYETAIAEVEQIVQQLESGELPLAEVVEQFQQASQRLQQCDRFLRDKQAELDLLIESLDEPPVPPQ.

It belongs to the XseB family. As to quaternary structure, heterooligomer composed of large and small subunits.

It localises to the cytoplasm. The catalysed reaction is Exonucleolytic cleavage in either 5'- to 3'- or 3'- to 5'-direction to yield nucleoside 5'-phosphates.. Its function is as follows. Bidirectionally degrades single-stranded DNA into large acid-insoluble oligonucleotides, which are then degraded further into small acid-soluble oligonucleotides. This is Exodeoxyribonuclease 7 small subunit from Synechococcus elongatus (strain ATCC 33912 / PCC 7942 / FACHB-805) (Anacystis nidulans R2).